The sequence spans 516 residues: Cytochrome P450 6d1 (516 aa).

Residue Cys-461 coordinates heme.

This sequence belongs to the cytochrome P450 family. It depends on heme as a cofactor.

It localises to the endoplasmic reticulum membrane. The protein localises to the microsome membrane. Functionally, metabolizes pyrethroid insecticides and other xenobiotics. The polypeptide is Cytochrome P450 6d1 (CYP6D1) (Musca domestica (House fly)).